Reading from the N-terminus, the 251-residue chain is Zinc import ATP-binding protein ZnuC (251 aa).

The ABC transporter domain maps to 5–220 (VSLENVSVSF…PEFISMFGPR (216 aa)). Position 37 to 44 (37 to 44 (GPNGAGKS)) interacts with ATP.

The protein belongs to the ABC transporter superfamily. Zinc importer (TC 3.A.1.15.5) family. The complex is composed of two ATP-binding proteins (ZnuC), two transmembrane proteins (ZnuB) and a solute-binding protein (ZnuA).

The protein resides in the cell inner membrane. The enzyme catalyses Zn(2+)(out) + ATP(in) + H2O(in) = Zn(2+)(in) + ADP(in) + phosphate(in) + H(+)(in). In terms of biological role, part of the ABC transporter complex ZnuABC involved in zinc import. Responsible for energy coupling to the transport system. In Shigella dysenteriae serotype 1 (strain Sd197), this protein is Zinc import ATP-binding protein ZnuC.